A 210-amino-acid chain; its full sequence is Somatotropin (210 aa).

The first 22 residues, 1–22 (MGQVFLLMPVLLVSCFLSHGAA), serve as a signal peptide directing secretion. H38 contributes to the Zn(2+) binding site. Cysteines 71 and 183 form a disulfide. Residue E192 coordinates Zn(2+). A disulfide bridge connects residues C200 and C208.

This sequence belongs to the somatotropin/prolactin family.

The protein resides in the secreted. In terms of biological role, growth hormone plays an important role in growth control and is involved in the regulation of several anabolic processes. Implicated as an osmoregulatory substance important for seawater adaptation. The chain is Somatotropin (gh) from Oncorhynchus masou (Cherry salmon).